Consider the following 241-residue polypeptide: Histidine-rich protein PFHRP-III (241 aa).

Positions 1-21 (MVSFSKNKVLSAAVFASVLLL) are cleaved as a signal peptide. The segment covering 52–76 (AHAGDAHHAHHVADAHHAHHVADAH) has biased composition (basic and acidic residues). 2 disordered regions span residues 52-145 (AHAG…ANAH) and 195-241 (AHHD…HLHH). Residues 84–145 (AHHAANAHHA…ANAHHAANAH (62 aa)) show a composition bias toward low complexity. Residues 195–231 (AHHDGAHHDDAHHDGAHHDDAHHDGAHHDGAHHDGAH) are compositionally biased toward basic and acidic residues.

This Plasmodium falciparum protein is Histidine-rich protein PFHRP-III.